Consider the following 206-residue polypeptide: 3-demethoxyubiquinol 3-hydroxylase (206 aa).

Positions 55, 85, 88, 137, 169, and 172 each coordinate Fe cation.

Belongs to the COQ7 family. Fe cation serves as cofactor.

It localises to the cell membrane. It catalyses the reaction a 5-methoxy-2-methyl-3-(all-trans-polyprenyl)benzene-1,4-diol + AH2 + O2 = a 3-demethylubiquinol + A + H2O. It functions in the pathway cofactor biosynthesis; ubiquinone biosynthesis. In terms of biological role, catalyzes the hydroxylation of 2-nonaprenyl-3-methyl-6-methoxy-1,4-benzoquinol during ubiquinone biosynthesis. The sequence is that of 3-demethoxyubiquinol 3-hydroxylase from Azoarcus sp. (strain BH72).